Here is a 329-residue protein sequence, read N- to C-terminus: Beta-tectorin (329 aa).

An N-terminal signal peptide occupies residues 1 to 17; that stretch reads MVTKAFVLLAIFAEASA. The region spanning 19 to 283 is the ZP domain; the sequence is SCAPNKADVI…LSCPVTCDKR (265 aa). Residues Asn-80, Asn-104, Asn-116, and Asn-145 are each glycosylated (N-linked (GlcNAc...) asparagine). A disulfide bond links Cys-204 and Cys-264. The GPI-anchor amidated glycine moiety is linked to residue Gly-305. A propeptide spans 306 to 329 (removed in mature form); sequence FSSLYSFSDVLHHLIMMLGICAVL.

As to quaternary structure, may form homomeric filament after self-association or heteromeric filament after association with alpha-tectorin. Interacts with CEACAM16. Post-translationally, the presence of a hydrophobic C-terminus preceded by a potential cleavage site strongly suggests that tectorins are synthesized as glycosylphosphatidylinositol-linked, membrane-bound precursors. Tectorins are targeted to the apical surface of the inner ear epithelia by the lipid and proteolytically released into the extracellular compartment.

The protein resides in the cell membrane. Its subcellular location is the secreted. It is found in the extracellular space. It localises to the extracellular matrix. Its function is as follows. One of the major non-collagenous components of the tectorial membrane. The tectorial membrane is an extracellular matrix of the inner ear that covers the neuroepithelium of the cochlea and contacts the stereocilia bundles of specialized sensory hair cells. Sound induces movement of these hair cells relative to the tectorial membrane, deflects the stereocilia and leads to fluctuations in hair-cell membrane potential, transducing sound into electrical signals. This is Beta-tectorin (TECTB) from Homo sapiens (Human).